The sequence spans 404 residues: tRNA pseudouridine synthase D (404 aa).

The active-site Nucleophile is the Asp79. A TRUD domain is found at 154-364; it reads GVPNRFGEQR…MEGERRPLRV (211 aa).

Belongs to the pseudouridine synthase TruD family.

It catalyses the reaction uridine(13) in tRNA = pseudouridine(13) in tRNA. In terms of biological role, responsible for synthesis of pseudouridine from uracil-13 in transfer RNAs. This Geobacter metallireducens (strain ATCC 53774 / DSM 7210 / GS-15) protein is tRNA pseudouridine synthase D.